A 156-amino-acid chain; its full sequence is Keratin, high-sulfur matrix protein, B2B (156 aa).

Ala1 carries the post-translational modification N-acetylalanine. Repeats lie at residues 26–35 (PTCSQTSCCQ), 36–45 (PTSIQTSCCQ), 46–55 (PISIQTSCCQ), and 56–65 (PTCLQTSGCE).

Functionally, the keratin products of mammalian epidermal derivatives such as wool and hair consist of microfibrils embedded in a rigid matrix of other proteins. The matrix proteins include the high-sulfur and high-tyrosine keratins, having molecular weights of 6-20 kDa, whereas the microfibrils contain the larger, low-sulfur keratins (40-56 kDa). The sequence is that of Keratin, high-sulfur matrix protein, B2B from Ovis aries (Sheep).